We begin with the raw amino-acid sequence, 424 residues long: MNPLWQQYIQILNQVVKPALGCTEPIAAAYASAVARTLLGIVPEAISVQVSDNLYKNSMGVYVPGTGKIGLAIAAAAGAIAGNAEAGLEVLAAITPEQVAQAQDLIDAGKVKVERTETEEFIYCCVTLKAGEQEALVKICGGHTLIAEKRLNGEPVFTADNAQSAATGSICDGIDISIKSIYQFAQEVPFDQIKFILKASELNGKLSDEGMAKPYGLEVGRTMKSGIAAGIIGEDLLNKIVMLTAAASDARMGGANLPAMSNLGSGNQGIAATIPVVLTAQCYNVTEEKLARALIMSHLGAIYIKSHYPPLSAFCGNTVTSAAASMAMVYIAGGSFEQSCFAIQNVISDSSGMVCDGAKASCAMKVSTSSSAAVRSFLMALNSQNVSGQGIIATDVEKTIKNIGKMILNGMSSTDITIIDIMST.

It belongs to the UPF0597 family.

This is UPF0597 protein Sputcn32_1209 from Shewanella putrefaciens (strain CN-32 / ATCC BAA-453).